The chain runs to 337 residues: Mannitol dehydrogenase (337 aa).

Zn(2+) is bound by residues Cys-27, His-49, Cys-80, Cys-83, Cys-86, Cys-94, and Cys-143.

The protein belongs to the zinc-containing alcohol dehydrogenase family. Zn(2+) serves as cofactor.

It catalyses the reaction D-mannitol + NAD(+) = D-mannose + NADH + H(+). Oxidizes mannitol to mannose. Provides the initial step by which translocated mannitol is committed to central metabolism and, by regulating mannitol pool size, is important in regulating salt tolerance at the cellular level. This Petroselinum crispum (Parsley) protein is Mannitol dehydrogenase (ELI3).